Here is a 299-residue protein sequence, read N- to C-terminus: Acetaldehyde dehydrogenase 1 (299 aa).

The active-site Acyl-thioester intermediate is Cys130. Residues 161 to 169 (SVGPGTRKN) and Asn272 contribute to the NAD(+) site.

This sequence belongs to the acetaldehyde dehydrogenase family.

The enzyme catalyses acetaldehyde + NAD(+) + CoA = acetyl-CoA + NADH + H(+). The polypeptide is Acetaldehyde dehydrogenase 1 (mhpF) (Burkholderia cenocepacia (strain ATCC BAA-245 / DSM 16553 / LMG 16656 / NCTC 13227 / J2315 / CF5610) (Burkholderia cepacia (strain J2315))).